The sequence spans 644 residues: Protein cueball (644 aa).

The N-terminal stretch at 1 to 26 (MIRIRFGMDVLLVVLLATCLLTPAHG) is a signal peptide. Residues 27 to 531 (TPLEWDFAVT…VCLTPRVWTS (505 aa)) are Extracellular-facing. N-linked (GlcNAc...) asparagine glycosylation is found at Asn-82 and Asn-108. LDL-receptor class B repeat units follow at residues 121-166 (MNLF…DVCR), 167-211 (RKLY…DQLS), and 212-257 (DRLF…TNDA). Asn-175 and Asn-190 each carry an N-linked (GlcNAc...) asparagine glycan. Asn-313 carries an N-linked (GlcNAc...) asparagine glycan. EGF-like domains follow at residues 398–430 (EIRE…FTGE) and 433–471 (ELSV…ARCE). Intrachain disulfides connect Cys-402–Cys-411, Cys-406–Cys-421, Cys-437–Cys-447, Cys-441–Cys-459, and Cys-461–Cys-470. 2 N-linked (GlcNAc...) asparagine glycosylation sites follow: Asn-473 and Asn-508. A helical membrane pass occupies residues 532–552 (SVIIILVVGIVSSLLLVAVIV). Over 553 to 644 (HGIRRLYKPK…LIHNMEDDLY (92 aa)) the chain is Cytoplasmic.

Belongs to the cueball family.

It localises to the cell membrane. Its function is as follows. Has a role in spermatogenesis and oogenesis. The sequence is that of Protein cueball from Drosophila simulans (Fruit fly).